The sequence spans 461 residues: Argininosuccinate lyase (461 aa).

This sequence belongs to the lyase 1 family. Argininosuccinate lyase subfamily.

It is found in the cytoplasm. The enzyme catalyses 2-(N(omega)-L-arginino)succinate = fumarate + L-arginine. It participates in amino-acid biosynthesis; L-arginine biosynthesis; L-arginine from L-ornithine and carbamoyl phosphate: step 3/3. The chain is Argininosuccinate lyase from Trichormus variabilis (strain ATCC 29413 / PCC 7937) (Anabaena variabilis).